We begin with the raw amino-acid sequence, 255 residues long: 3-dehydroquinate dehydratase (255 aa).

Residues 46 to 48 (EWR) and Arg82 each bind 3-dehydroquinate. His143 functions as the Proton donor/acceptor in the catalytic mechanism. Residue Lys170 is the Schiff-base intermediate with substrate of the active site. 3-dehydroquinate contacts are provided by Arg213, Ser232, and Gln236.

It belongs to the type-I 3-dehydroquinase family. Homodimer.

The enzyme catalyses 3-dehydroquinate = 3-dehydroshikimate + H2O. It functions in the pathway metabolic intermediate biosynthesis; chorismate biosynthesis; chorismate from D-erythrose 4-phosphate and phosphoenolpyruvate: step 3/7. Its function is as follows. Involved in the third step of the chorismate pathway, which leads to the biosynthesis of aromatic amino acids. Catalyzes the cis-dehydration of 3-dehydroquinate (DHQ) and introduces the first double bond of the aromatic ring to yield 3-dehydroshikimate. This Bacillus subtilis (strain 168) protein is 3-dehydroquinate dehydratase.